Reading from the N-terminus, the 443-residue chain is Differentially expressed in FDCP 8 homolog B (443 aa).

The disordered stretch occupies residues His-14–Glu-49. The span at Pro-17–Asp-30 shows a compositional bias: basic and acidic residues. The span at Ser-31–Leu-45 shows a compositional bias: polar residues. Phorbol-ester/DAG-type zinc fingers lie at residues Glu-134–Cys-185 and Ile-364–Cys-424.

The protein belongs to the DEF8 family.

In terms of biological role, positively regulates lysosome peripheral distribution and ruffled border formation in osteoclasts. Involved in bone resorption. The chain is Differentially expressed in FDCP 8 homolog B (def8-b) from Xenopus laevis (African clawed frog).